A 593-amino-acid chain; its full sequence is Proline--tRNA ligase (593 aa).

This sequence belongs to the class-II aminoacyl-tRNA synthetase family. ProS type 1 subfamily. In terms of assembly, homodimer.

It localises to the cytoplasm. The catalysed reaction is tRNA(Pro) + L-proline + ATP = L-prolyl-tRNA(Pro) + AMP + diphosphate. Its function is as follows. Catalyzes the attachment of proline to tRNA(Pro) in a two-step reaction: proline is first activated by ATP to form Pro-AMP and then transferred to the acceptor end of tRNA(Pro). As ProRS can inadvertently accommodate and process non-cognate amino acids such as alanine and cysteine, to avoid such errors it has two additional distinct editing activities against alanine. One activity is designated as 'pretransfer' editing and involves the tRNA(Pro)-independent hydrolysis of activated Ala-AMP. The other activity is designated 'posttransfer' editing and involves deacylation of mischarged Ala-tRNA(Pro). The misacylated Cys-tRNA(Pro) is not edited by ProRS. The sequence is that of Proline--tRNA ligase from Synechococcus sp. (strain CC9902).